Consider the following 211-residue polypeptide: Thymidylate kinase (211 aa).

10 to 17 (GGDGVGKS) serves as a coordination point for ATP.

It belongs to the thymidylate kinase family.

The catalysed reaction is dTMP + ATP = dTDP + ADP. Its function is as follows. Phosphorylation of dTMP to form dTDP in both de novo and salvage pathways of dTTP synthesis. This Clavibacter michiganensis subsp. michiganensis (strain NCPPB 382) protein is Thymidylate kinase.